A 339-amino-acid polypeptide reads, in one-letter code: Longiborneol synthase CLM1 (339 aa).

Residues 1 to 17 (MLATPTLSNFDKPSLPS) are compositionally biased toward polar residues. The disordered stretch occupies residues 1-21 (MLATPTLSNFDKPSLPSSEGG). The Mg(2+) site is built by Asp112, Asn241, Ser245, and Glu249. Residues 241-249 (NDVLSFYKE) carry the NDXXSXXXE magnesium-binding motif motif.

Belongs to the trichodiene synthase family. Mg(2+) is required as a cofactor. The cofactor is Mn(2+).

It carries out the reaction (2E,6E)-farnesyl diphosphate + H2O = (-)-longiborneol + diphosphate. It participates in mycotoxin biosynthesis. In terms of biological role, terpene cyclase involved in the biosynthesis of culmorin, a tricyclic sesquiterpene diol reported to have antifungal activity and some phytotoxicity to wheat coleoptile tissue, contributing to Fusarium head blight disease. The terpene cyclase CLM1 is responsible for the cyclization of farnesyl diphosphate into the intermediate longiborneol. Longiborneol is then hydroxylated in a regio- and endo-stereoselective manner at position C-11 by the cytochrome P450 monooxygenase CLM2 to produce culmorin. Additional non-specific oxygenases are also able to hydroxylate longiborneol at other sites than C-11 leading to 3-hydroxylongiborneol, 5-hydroxylongiborneol, 12-hydroxylongiborneol and 15-hydroxylongiborneol. Moreover, another oxygenase capable of installing a C-11 exo-hydroxy group in longiborneol can also yield 11-epi-acetylculmorin. The production of these longiborneol derivatives is dwarfed by the high abundance of culmorin, suggesting that CLM2 displays superior enzymatic activity to the unidentified, possibly promiscuous, additional oxygenases. The protein is Longiborneol synthase CLM1 of Gibberella zeae (strain ATCC MYA-4620 / CBS 123657 / FGSC 9075 / NRRL 31084 / PH-1) (Wheat head blight fungus).